The sequence spans 491 residues: Protein nucleotidyltransferase YdiU (491 aa).

8 residues coordinate ATP: Gly94, Gly96, Arg97, Lys117, Asp129, Gly130, Arg180, and Arg187. The active-site Proton acceptor is Asp256. The Mg(2+) site is built by Asn257 and Asp266. Position 266 (Asp266) interacts with ATP.

Belongs to the SELO family. Requires Mg(2+) as cofactor. Mn(2+) serves as cofactor.

It catalyses the reaction L-seryl-[protein] + ATP = 3-O-(5'-adenylyl)-L-seryl-[protein] + diphosphate. The enzyme catalyses L-threonyl-[protein] + ATP = 3-O-(5'-adenylyl)-L-threonyl-[protein] + diphosphate. The catalysed reaction is L-tyrosyl-[protein] + ATP = O-(5'-adenylyl)-L-tyrosyl-[protein] + diphosphate. It carries out the reaction L-histidyl-[protein] + UTP = N(tele)-(5'-uridylyl)-L-histidyl-[protein] + diphosphate. It catalyses the reaction L-seryl-[protein] + UTP = O-(5'-uridylyl)-L-seryl-[protein] + diphosphate. The enzyme catalyses L-tyrosyl-[protein] + UTP = O-(5'-uridylyl)-L-tyrosyl-[protein] + diphosphate. In terms of biological role, nucleotidyltransferase involved in the post-translational modification of proteins. It can catalyze the addition of adenosine monophosphate (AMP) or uridine monophosphate (UMP) to a protein, resulting in modifications known as AMPylation and UMPylation. This chain is Protein nucleotidyltransferase YdiU, found in Clostridium botulinum (strain Alaska E43 / Type E3).